Reading from the N-terminus, the 310-residue chain is NAD kinase 1 (310 aa).

Asp68 acts as the Proton acceptor in catalysis. NAD(+) contacts are provided by residues 68-69 (DG), 145-146 (NE), Arg156, His175, and Asp177.

It belongs to the NAD kinase family. It depends on a divalent metal cation as a cofactor.

It localises to the cytoplasm. The enzyme catalyses NAD(+) + ATP = ADP + NADP(+) + H(+). Involved in the regulation of the intracellular balance of NAD and NADP, and is a key enzyme in the biosynthesis of NADP. Catalyzes specifically the phosphorylation on 2'-hydroxyl of the adenosine moiety of NAD to yield NADP. The polypeptide is NAD kinase 1 (Gloeobacter violaceus (strain ATCC 29082 / PCC 7421)).